The primary structure comprises 339 residues: Annexin A2 (339 aa).

Residue serine 2 is modified to N-acetylserine. Residues 2-24 (STVHEILCKLSLEGDHSTPPSAY) are S100A10-binding site. Phosphotyrosine; by SRC is present on tyrosine 24. Serine 26 carries the post-translational modification Phosphoserine; by PKC. Annexin repeat units follow at residues 33–104 (FDAE…GLLK) and 105–176 (TPAQ…ALAK). Lysine 49 is subject to N6-acetyllysine; alternate. Residue lysine 49 forms a Glycyl lysine isopeptide (Lys-Gly) (interchain with G-Cter in SUMO1); alternate linkage. Residue lysine 49 forms a Glycyl lysine isopeptide (Lys-Gly) (interchain with G-Cter in SUMO2); alternate linkage. Residue lysine 152 is modified to N6-acetyllysine. A Phosphoserine modification is found at serine 184. Annexin repeat units follow at residues 189 to 261 (ELID…NLVQ) and 265 to 336 (NKPL…YLCG). Position 199 is a phosphotyrosine (tyrosine 199). At lysine 227 the chain carries N6-acetyllysine.

It belongs to the annexin family. Heterotetramer containing 2 light chains of S100A10/p11 and 2 heavy chains of ANXA2/p36. Interacts with ATP1B1. Interacts with DYSF. Interacts with COCH. Interacts (via repeat Annexin 1) with PCSK9 (via the C-terminal domain); the interaction inhibits the degradation of LDLR. Interacts with CEACAM1 (via the cytoplasmic domain); this interaction is regulated by phosphorylation of CEACAM1. Interacts with APPL2 and APPL1; targets APPL2 to endosomes and acting in parallel to RAB5A. Interacts with S100A4. May interact with UBAP2. ISGylated. In terms of tissue distribution, expressed strongly in velvet antler reserve mesenchyme.

Its subcellular location is the secreted. It is found in the extracellular space. The protein localises to the extracellular matrix. It localises to the basement membrane. Functionally, calcium-regulated membrane-binding protein whose affinity for calcium is greatly enhanced by anionic phospholipids. It binds two calcium ions with high affinity. May be involved in heat-stress response. Inhibits PCSK9-enhanced LDLR degradation, probably reduces PCSK9 protein levels via a translational mechanism but also competes with LDLR for binding with PCSK9. Binds to endosomes damaged by phagocytosis of particulate wear debris and participates in endosomal membrane stabilization, thereby limiting NLRP3 inflammasome activation. Required for endothelial cell surface plasmin generation and may support fibrinolytic surveillance and neoangiogenesis. This Cervus elaphus (Red deer) protein is Annexin A2 (ANXA2).